Consider the following 471-residue polypeptide: V-type ATP synthase beta chain (471 aa).

This sequence belongs to the ATPase alpha/beta chains family.

Functionally, produces ATP from ADP in the presence of a proton gradient across the membrane. The V-type beta chain is a regulatory subunit. This Streptococcus pyogenes serotype M28 (strain MGAS6180) protein is V-type ATP synthase beta chain.